A 156-amino-acid polypeptide reads, in one-letter code: Small ribosomal subunit protein uS7 (156 aa).

It belongs to the universal ribosomal protein uS7 family. In terms of assembly, part of the 30S ribosomal subunit. Contacts proteins S9 and S11.

Functionally, one of the primary rRNA binding proteins, it binds directly to 16S rRNA where it nucleates assembly of the head domain of the 30S subunit. Is located at the subunit interface close to the decoding center, probably blocks exit of the E-site tRNA. In Bradyrhizobium diazoefficiens (strain JCM 10833 / BCRC 13528 / IAM 13628 / NBRC 14792 / USDA 110), this protein is Small ribosomal subunit protein uS7.